Here is a 357-residue protein sequence, read N- to C-terminus: Anthranilate phosphoribosyltransferase (357 aa).

5-phospho-alpha-D-ribose 1-diphosphate contacts are provided by residues glycine 94, 97-98 (GD), threonine 102, 104-107 (NLST), 122-130 (KHGNRAASS), and glycine 134. Glycine 94 contributes to the anthranilate binding site. Position 106 (serine 106) interacts with Mg(2+). Asparagine 125 contacts anthranilate. Residue arginine 180 participates in anthranilate binding. Residues aspartate 238 and glutamate 239 each coordinate Mg(2+).

This sequence belongs to the anthranilate phosphoribosyltransferase family. In terms of assembly, homodimer. It depends on Mg(2+) as a cofactor.

It carries out the reaction N-(5-phospho-beta-D-ribosyl)anthranilate + diphosphate = 5-phospho-alpha-D-ribose 1-diphosphate + anthranilate. It functions in the pathway amino-acid biosynthesis; L-tryptophan biosynthesis; L-tryptophan from chorismate: step 2/5. Functionally, catalyzes the transfer of the phosphoribosyl group of 5-phosphorylribose-1-pyrophosphate (PRPP) to anthranilate to yield N-(5'-phosphoribosyl)-anthranilate (PRA). This is Anthranilate phosphoribosyltransferase from Mycobacterium sp. (strain KMS).